The primary structure comprises 163 residues: Photosystem II extrinsic protein V (163 aa).

Residues 1–26 (MFRRLIGVVVATVLLTFQLIVGSATA) form the signal peptide. Positions 63, 66, 67, and 118 each coordinate heme c.

The protein belongs to the cytochrome c family. PsbV subfamily. In terms of assembly, PSII is composed of 1 copy each of membrane proteins PsbA, PsbB, PsbC, PsbD, PsbE, PsbF, PsbH, PsbI, PsbJ, PsbK, PsbL, PsbM, PsbT, PsbX, PsbY, PsbZ, Psb30/Ycf12, peripheral proteins PsbO, CyanoQ (PsbQ), PsbU, PsbV and a large number of cofactors. It forms dimeric complexes. Heme c serves as cofactor.

The protein localises to the cellular thylakoid membrane. Functionally, one of the extrinsic, lumenal subunits of photosystem II (PSII). PSII is a light-driven water plastoquinone oxidoreductase, using light energy to abstract electrons from H(2)O, generating a proton gradient subsequently used for ATP formation. The extrinsic proteins stabilize the structure of photosystem II oxygen-evolving complex (OEC), the ion environment of oxygen evolution and protect the OEC against heat-induced inactivation. Low-potential cytochrome c that plays a role in the OEC of PSII. The protein is Photosystem II extrinsic protein V of Trichormus variabilis (strain ATCC 29413 / PCC 7937) (Anabaena variabilis).